A 394-amino-acid polypeptide reads, in one-letter code: Elongation factor Tu 2 (394 aa).

The tr-type G domain occupies 10-204; that stretch reads KPHVNVGTIG…ALDSYIPEPE (195 aa). The tract at residues 19–26 is G1; sequence GHVDHGKT. 19–26 contacts GTP; the sequence is GHVDHGKT. Thr-26 contacts Mg(2+). A G2 region spans residues 60–64; sequence GITIN. Residues 81 to 84 form a G3 region; sequence DCPG. Residues 81–85 and 136–139 each bind GTP; these read DCPGH and NKCD. The G4 stretch occupies residues 136-139; the sequence is NKCD. Residues 174–176 are G5; that stretch reads SAL.

Belongs to the TRAFAC class translation factor GTPase superfamily. Classic translation factor GTPase family. EF-Tu/EF-1A subfamily. In terms of assembly, monomer.

The protein localises to the cytoplasm. The catalysed reaction is GTP + H2O = GDP + phosphate + H(+). GTP hydrolase that promotes the GTP-dependent binding of aminoacyl-tRNA to the A-site of ribosomes during protein biosynthesis. The sequence is that of Elongation factor Tu 2 from Shewanella loihica (strain ATCC BAA-1088 / PV-4).